The following is a 71-amino-acid chain: uncharacterized protein (71 aa).

Residues 12–34 (GYLSLTLVTLPVCSSLHCYFLWT) traverse the membrane as a helical segment.

It is found in the membrane. This is an uncharacterized protein from Dictyostelium discoideum (Social amoeba).